Here is a 136-residue protein sequence, read N- to C-terminus: Large ribosomal subunit protein uL16 (136 aa).

This sequence belongs to the universal ribosomal protein uL16 family. Part of the 50S ribosomal subunit.

Functionally, binds 23S rRNA and is also seen to make contacts with the A and possibly P site tRNAs. This Elusimicrobium minutum (strain Pei191) protein is Large ribosomal subunit protein uL16.